The primary structure comprises 365 residues: D-alanine--D-alanine ligase (365 aa).

The ATP-grasp domain occupies 140-346 (KKILRRHGLQ…YSQLLTDLIY (207 aa)). An ATP-binding site is contributed by 173 to 228 (EKQLSYPIFVKPANLGSSVGISKVKNREELIQGIDLAVKYDMKCLAEEFIPGKEIE). Mg(2+)-binding residues include D299, E313, and N315.

It belongs to the D-alanine--D-alanine ligase family. Mg(2+) is required as a cofactor. Mn(2+) serves as cofactor.

The protein localises to the cytoplasm. The enzyme catalyses 2 D-alanine + ATP = D-alanyl-D-alanine + ADP + phosphate + H(+). It participates in cell wall biogenesis; peptidoglycan biosynthesis. Cell wall formation. The sequence is that of D-alanine--D-alanine ligase from Natranaerobius thermophilus (strain ATCC BAA-1301 / DSM 18059 / JW/NM-WN-LF).